The primary structure comprises 84 residues: Large ribosomal subunit protein eL34 (84 aa).

Belongs to the eukaryotic ribosomal protein eL34 family.

The protein is Large ribosomal subunit protein eL34 of Pyrobaculum calidifontis (strain DSM 21063 / JCM 11548 / VA1).